A 488-amino-acid polypeptide reads, in one-letter code: Glutamyl-tRNA(Gln) amidotransferase subunit A (488 aa).

Catalysis depends on charge relay system residues Lys-77 and Ser-152. The Acyl-ester intermediate role is filled by Ser-176.

This sequence belongs to the amidase family. GatA subfamily. As to quaternary structure, heterotrimer of A, B and C subunits.

It catalyses the reaction L-glutamyl-tRNA(Gln) + L-glutamine + ATP + H2O = L-glutaminyl-tRNA(Gln) + L-glutamate + ADP + phosphate + H(+). In terms of biological role, allows the formation of correctly charged Gln-tRNA(Gln) through the transamidation of misacylated Glu-tRNA(Gln) in organisms which lack glutaminyl-tRNA synthetase. The reaction takes place in the presence of glutamine and ATP through an activated gamma-phospho-Glu-tRNA(Gln). The chain is Glutamyl-tRNA(Gln) amidotransferase subunit A from Streptococcus gordonii (strain Challis / ATCC 35105 / BCRC 15272 / CH1 / DL1 / V288).